Here is a 249-residue protein sequence, read N- to C-terminus: Chitooligosaccharide deacetylase (249 aa).

Mg(2+) contacts are provided by His-61 and His-125.

It belongs to the YdjC deacetylase family. ChbG subfamily. As to quaternary structure, homodimer. It depends on Mg(2+) as a cofactor.

The protein resides in the cytoplasm. It carries out the reaction N,N'-diacetylchitobiose + H2O = N-acetyl-beta-D-glucosaminyl-(1-&gt;4)-D-glucosamine + acetate. The enzyme catalyses diacetylchitobiose-6'-phosphate + H2O = N'-monoacetylchitobiose-6'-phosphate + acetate. The protein operates within glycan degradation; chitin degradation. Involved in the degradation of chitin. ChbG is essential for growth on the acetylated chitooligosaccharides chitobiose and chitotriose but is dispensable for growth on cellobiose and chitosan dimer, the deacetylated form of chitobiose. Deacetylation of chitobiose-6-P and chitotriose-6-P is necessary for both the activation of the chb promoter by the regulatory protein ChbR and the hydrolysis of phosphorylated beta-glucosides by the phospho-beta-glucosidase ChbF. Catalyzes the removal of only one acetyl group from chitobiose-6-P to yield monoacetylchitobiose-6-P, the inducer of ChbR and the substrate of ChbF. The protein is Chitooligosaccharide deacetylase of Escherichia coli O7:K1 (strain IAI39 / ExPEC).